The primary structure comprises 318 residues: Aspartate carbamoyltransferase catalytic subunit (318 aa).

Residues R58 and T59 each coordinate carbamoyl phosphate. K86 provides a ligand contact to L-aspartate. Carbamoyl phosphate is bound by residues R108, H141, and Q144. L-aspartate contacts are provided by R174 and R226. Carbamoyl phosphate is bound by residues G270 and P271.

The protein belongs to the aspartate/ornithine carbamoyltransferase superfamily. ATCase family. Heterododecamer (2C3:3R2) of six catalytic PyrB chains organized as two trimers (C3), and six regulatory PyrI chains organized as three dimers (R2).

The catalysed reaction is carbamoyl phosphate + L-aspartate = N-carbamoyl-L-aspartate + phosphate + H(+). It participates in pyrimidine metabolism; UMP biosynthesis via de novo pathway; (S)-dihydroorotate from bicarbonate: step 2/3. Its function is as follows. Catalyzes the condensation of carbamoyl phosphate and aspartate to form carbamoyl aspartate and inorganic phosphate, the committed step in the de novo pyrimidine nucleotide biosynthesis pathway. This chain is Aspartate carbamoyltransferase catalytic subunit, found in Lactobacillus delbrueckii subsp. bulgaricus (strain ATCC 11842 / DSM 20081 / BCRC 10696 / JCM 1002 / NBRC 13953 / NCIMB 11778 / NCTC 12712 / WDCM 00102 / Lb 14).